We begin with the raw amino-acid sequence, 359 residues long: Phosphate acyltransferase (359 aa).

The protein belongs to the PlsX family. Homodimer. Probably interacts with PlsY.

The protein localises to the cytoplasm. The catalysed reaction is a fatty acyl-[ACP] + phosphate = an acyl phosphate + holo-[ACP]. The protein operates within lipid metabolism; phospholipid metabolism. Catalyzes the reversible formation of acyl-phosphate (acyl-PO(4)) from acyl-[acyl-carrier-protein] (acyl-ACP). This enzyme utilizes acyl-ACP as fatty acyl donor, but not acyl-CoA. In Salmonella agona (strain SL483), this protein is Phosphate acyltransferase.